We begin with the raw amino-acid sequence, 374 residues long: Fatty acid conjugase FAC2 A (374 aa).

2 consecutive transmembrane segments (helical) span residues 50 to 70 (IIVT…LPGF) and 74 to 94 (IVWP…WMIG). The short motif at 95–99 (HECGH) is the Histidine box-1 element. Residues 131-135 (HRNHH) carry the Histidine box-2 motif. The next 3 membrane-spanning stretches (helical) occupy residues 168-188 (MGLM…YIMF), 219-239 (VLFS…IVMV), and 246-266 (FYVY…ATYL). Positions 306 to 310 (HVIHH) match the Histidine box-3 motif.

This sequence belongs to the fatty acid desaturase type 1 family. Expressed exclusively in the developing seeds. Not detected in leaves or flower buds.

It is found in the microsome membrane. It carries out the reaction a (9Z,12Z)-octadecadienoyl-containing glycerolipid + AH2 + O2 = a (8E,10E,12Z)-octadecatrienoyl-containing glycerolipid + A + 2 H2O. It functions in the pathway lipid metabolism; polyunsaturated fatty acid biosynthesis. Fatty acid conjugase converting 18:2(9Z, 12Z) to calendic acid 18:3(8E, 10E, 12Z). Converts alpha-linolenic acid (18:3(9Z, 12Z, 15Z)) into 18:4(8E, 10E, 12Z, 15Z). Also has weak activity on the mono-unsaturates 16:1(9Z) and 18:1(9Z) producing two conjugated double bonds at delta(8) and delta(10) position. The protein is Fatty acid conjugase FAC2 A of Calendula officinalis (Pot marigold).